The following is a 203-amino-acid chain: Urease accessory protein UreG (203 aa).

14–21 (GPVGSGKT) contributes to the GTP binding site.

Belongs to the SIMIBI class G3E GTPase family. UreG subfamily. As to quaternary structure, homodimer. UreD, UreF and UreG form a complex that acts as a GTP-hydrolysis-dependent molecular chaperone, activating the urease apoprotein by helping to assemble the nickel containing metallocenter of UreC. The UreE protein probably delivers the nickel.

The protein localises to the cytoplasm. Facilitates the functional incorporation of the urease nickel metallocenter. This process requires GTP hydrolysis, probably effectuated by UreG. The sequence is that of Urease accessory protein UreG from Rhizobium etli (strain CIAT 652).